The sequence spans 295 residues: Ribosomal protein L11 methyltransferase (295 aa).

S-adenosyl-L-methionine-binding residues include T146, G167, D189, and N231.

Belongs to the methyltransferase superfamily. PrmA family.

It is found in the cytoplasm. It carries out the reaction L-lysyl-[protein] + 3 S-adenosyl-L-methionine = N(6),N(6),N(6)-trimethyl-L-lysyl-[protein] + 3 S-adenosyl-L-homocysteine + 3 H(+). In terms of biological role, methylates ribosomal protein L11. In Vibrio parahaemolyticus serotype O3:K6 (strain RIMD 2210633), this protein is Ribosomal protein L11 methyltransferase.